A 1341-amino-acid chain; its full sequence is Subtilisin-like protease 2 (1341 aa).

Positions 1 to 18 (MLNIIYVVSLILIKFIFY) are cleaved as a signal peptide. The propeptide at 19–686 (KECNNNNNYY…KLYNNKYSFL (668 aa)) is inhibition peptide. Disordered stretches follow at residues 85–107 (EKKTKGEENEIEKKKENDLEKKK) and 143–171 (ADVSNNDNSGHEENNKHKLNKKNSSNYKN). N-linked (GlcNAc...) asparagine glycosylation is found at Asn-165, Asn-343, Asn-449, Asn-453, and Asn-492. A disordered region spans residues 415-474 (KKSKKEKENTQQKGGNNPNVDINILNNNNNNNNNNNSNNNSNSMNDEEINYNNNNNNKES). Over residues 430 to 474 (NNPNVDINILNNNNNNNNNNNSNNNSNSMNDEEINYNNNNNNKES) the composition is skewed to low complexity. The interval 499-530 (IYHNKNDNSYKNKKEGTGKNNDNNDPNNNNNK) is disordered. The span at 502-515 (NKNDNSYKNKKEGT) shows a compositional bias: basic and acidic residues. Over residues 517 to 530 (KNNDNNDPNNNNNK) the composition is skewed to low complexity. N-linked (GlcNAc...) asparagine glycans are attached at residues Asn-550, Asn-641, and Asn-728. At 687-1136 (NKFLNIEPLI…LYNLYEYDSH (450 aa)) the chain is on the extracellular side. In terms of domain architecture, Peptidase S8 spans 726–1019 (TWNLSIIRVF…DSLVNAEGAV (294 aa)). Active-site charge relay system residues include Asp-754 and His-797. Asn-820, Asn-856, Asn-892, and Asn-950 each carry an N-linked (GlcNAc...) asparagine glycan. The active-site Charge relay system is Ser-960. Residues Asn-1009 and Asn-1105 are each glycosylated (N-linked (GlcNAc...) asparagine). Residues 1137–1157 (YLLASVILFFLALLSIFVGMI) form a helical membrane-spanning segment. At 1158-1341 (YMKSRKHSDK…MNQLDDMFMK (184 aa)) the chain is on the cytoplasmic side.

This sequence belongs to the peptidase S8 family. In terms of processing, proteolytically cleaved at the N-terminus to generate a 74kDa intermediate which is further processed into a 72kDa form. The first maturation cleavage is autocatalytic, occurs in the ER and is necessary for the subsequent SUB2 trafficking to the microneme. The second cleavage may be mediated by PMX/plasmepsin X.

It localises to the cell membrane. It is found in the cytoplasmic vesicle. Its subcellular location is the secretory vesicle. The protein localises to the microneme membrane. It catalyses the reaction Hydrolysis of proteins with broad specificity for peptide bonds, and a preference for a large uncharged residue in P1. Hydrolyzes peptide amides.. Its activity is regulated as follows. Activation may be calcium-dependent. Inhibited by the non-covalent interaction with the cleaved propeptide. Functionally, serine protease which plays an essential role in the shedding of AMA1, MSP1 and MSP7 from the surface of the invading merozoite; this step is essential for productive invasion and the release of the adhesion between the erythrocyte and the merozoite. May cleave TRAMP/PTTRAMP, thereby shedding TRAMP from the merozoite surface during erythrocyte invasion. In Plasmodium falciparum (isolate 3D7), this protein is Subtilisin-like protease 2.